A 299-amino-acid chain; its full sequence is ATP phosphoribosyltransferase (299 aa).

This sequence belongs to the ATP phosphoribosyltransferase family. Long subfamily. It depends on Mg(2+) as a cofactor.

The protein resides in the cytoplasm. It catalyses the reaction 1-(5-phospho-beta-D-ribosyl)-ATP + diphosphate = 5-phospho-alpha-D-ribose 1-diphosphate + ATP. The protein operates within amino-acid biosynthesis; L-histidine biosynthesis; L-histidine from 5-phospho-alpha-D-ribose 1-diphosphate: step 1/9. With respect to regulation, feedback inhibited by histidine. Catalyzes the condensation of ATP and 5-phosphoribose 1-diphosphate to form N'-(5'-phosphoribosyl)-ATP (PR-ATP). Has a crucial role in the pathway because the rate of histidine biosynthesis seems to be controlled primarily by regulation of HisG enzymatic activity. This Shewanella piezotolerans (strain WP3 / JCM 13877) protein is ATP phosphoribosyltransferase.